A 1235-amino-acid polypeptide reads, in one-letter code: N-acetylglucosamine-1-phosphotransferase subunits alpha/beta (1235 aa).

Residues 22 to 42 (VCFVGVVVTIVSAFQFGEVVL) traverse the membrane as a helical segment. 4 N-linked (GlcNAc...) asparagine glycosylation sites follow: asparagine 83, asparagine 114, asparagine 148, and asparagine 179. 4 disulfide bridges follow: cysteine 438-cysteine 461, cysteine 452-cysteine 468, cysteine 505-cysteine 528, and cysteine 519-cysteine 535. LNR repeat units follow at residues 438–473 (CAEG…GNTA) and 505–545 (CNQG…ELYK). Ca(2+) contacts are provided by aspartate 449, aspartate 464, aspartate 467, aspartate 516, aspartate 531, and aspartate 534. Asparagine 614 and asparagine 729 each carry an N-linked (GlcNAc...) asparagine glycan. Residues 699 to 823 (NISLLPKEAQ…AQPTLGVTVS (125 aa)) form the DMAP1-binding domain. 2 disordered regions span residues 751–783 (QART…HRSE) and 830–850 (LIVP…AEGN). Positions 837–848 (HLPKEEESDRAE) are enriched in basic and acidic residues. Positions 984-1019 (VQPLNISQVFHEVDTDQSGVLSDREIRTLATRIHDL) constitute an EF-hand domain. Asparagine 988 is a glycosylation site (N-linked (GlcNAc...) asparagine). Aspartate 997, aspartate 999, serine 1001, and glutamate 1008 together coordinate Ca(2+). A glycan (N-linked (GlcNAc...) asparagine) is linked at asparagine 1108. The chain crosses the membrane as a helical span at residues 1194-1214 (VLATLIIFTIFSFFAEQIIAL).

Belongs to the stealth family. Hexamer of two alpha, two beta and two gamma (GNPTG) subunits; disulfide-linked. The alpha and/or the beta subunits of the enzyme constitute the catalytic subunits. Interacts with LYSET; facilitates proper localization of GNPTAB. In terms of processing, the alpha- and beta-subunits are generated by a proteolytic cleavage by MBTPS1 protease at the Lys-907-Asp-908 bond.

It localises to the golgi apparatus membrane. The enzyme catalyses N(4)-[alpha-D-mannosyl-(1-&gt;2)-alpha-D-mannosyl-(glycan)]-L-asparaginyl-[protein] + UDP-N-acetyl-alpha-D-glucosamine = N(4)-[6-(N-acetyl-alpha-D-glucosaminyl-1-phospho)-alpha-D-mannosyl-(1-&gt;2)-alpha-D-mannosyl-(glycan)]-L-asparaginyl-[protein] + UMP + H(+). Functionally, catalyzes the formation of mannose 6-phosphate (M6P) markers on high mannose type oligosaccharides in the Golgi apparatus. M6P residues are required to bind to the M6P receptors (MPR), which mediate the vesicular transport of lysosomal enzymes to the endosomal/prelysosomal compartment. In Mus musculus (Mouse), this protein is N-acetylglucosamine-1-phosphotransferase subunits alpha/beta (Gnptab).